Reading from the N-terminus, the 310-residue chain is ATP-dependent protease (310 aa).

The 163-residue stretch at 24-186 (RLNQCFFKFK…TPNQKEENYF (163 aa)) folds into the Integrase catalytic domain.

The chain is ATP-dependent protease from Lactococcus lactis subsp. lactis (Streptococcus lactis).